Consider the following 43-residue polypeptide: Protein PsbN (43 aa).

Residues 4–24 (ATIIVIFVSSLLLGITAYSIY) form a helical membrane-spanning segment.

This sequence belongs to the PsbN family.

It localises to the plastid. The protein localises to the chloroplast thylakoid membrane. May play a role in photosystem I and II biogenesis. This Trieres chinensis (Marine centric diatom) protein is Protein PsbN.